Consider the following 326-residue polypeptide: Olfactory receptor 11H12 (326 aa).

The Extracellular segment spans residues 1–44 (MCPLTLQVTGLMNVSEPNSSFAFVNEFILQGFTCEWTIQIFLFS). 2 N-linked (GlcNAc...) asparagine glycosylation sites follow: Asn-13 and Asn-18. Residues 45–65 (LFTTTYALTITGNGAIAFVLW) form a helical membrane-spanning segment. The Cytoplasmic portion of the chain corresponds to 66–72 (CDWRLHT). Residues 73-93 (PMYMFLGNFSFLEIWYVSSTV) traverse the membrane as a helical segment. The Extracellular portion of the chain corresponds to 94–112 (PKMLVNFLSEKKNISFAGC). Asn-106 is a glycosylation site (N-linked (GlcNAc...) asparagine). A disulfide bond links Cys-112 and Cys-194. A helical membrane pass occupies residues 113 to 133 (FLQFYFFFSLGTSECLLLTVM). Topologically, residues 134-158 (AFDQYLAICRPLLYPNIMTGHLCAK) are cytoplasmic. The chain crosses the membrane as a helical span at residues 159–179 (LVILCWVCGFLWFLIPIVLIS). Residues 180–216 (QMPFCGPNIIDHVVCDPGPRFALDCVSAPRIQLFCYT) are Extracellular-facing. Residues 217 to 237 (LSSLVIFGNFLFIIGSYTLVL) traverse the membrane as a helical segment. Residues 238 to 259 (KAVLGMPSSTGRHKAFSTCGSH) lie on the Cytoplasmic side of the membrane. A helical transmembrane segment spans residues 260 to 280 (LAVVSLCYSSLMVMYVSPGLG). The Extracellular segment spans residues 281-287 (HSTGMQK). The helical transmembrane segment at 288–308 (IETLFYAMVTPLFNPLIYSLQ) threads the bilayer. Residues 309–326 (NKEIKAALRKVLGSSNII) are Cytoplasmic-facing.

The protein belongs to the G-protein coupled receptor 1 family.

Its subcellular location is the cell membrane. Its function is as follows. Odorant receptor. The sequence is that of Olfactory receptor 11H12 (OR11H12) from Homo sapiens (Human).